A 635-amino-acid polypeptide reads, in one-letter code: Sodium- and chloride-dependent creatine transporter 1 (635 aa).

Residues 1–11 (MANKSTENGIY) show a composition bias toward polar residues. A disordered region spans residues 1 to 27 (MANKSTENGIYSVSGEEKKGPLIAPGP). At 1–60 (MANKSTENGIYSVSGEEKKGPLIAPGPDGAPAKGDGPAALGAPGSLLAVPPRETWTRQMD) the chain is on the cytoplasmic side. The chain crosses the membrane as a helical span at residues 61-81 (FIMSCVGFAVGLGNVWRFPYL). The Extracellular portion of the chain corresponds to 82–87 (CYKNGG). Residues 88–108 (GVFLIPYILIALIGGIPIFFL) traverse the membrane as a helical segment. Over 109–138 (EISLGQFMKAGSINVWNICPLFKGLGYASM) the chain is Cytoplasmic. The helical transmembrane segment at 139 to 159 (VIVFYCNTYYIMVLAWGFYYL) threads the bilayer. Topologically, residues 160–230 (VKSFTTTLPW…LSEGLEVPGA (71 aa)) are extracellular. N192 and N197 each carry an N-linked (GlcNAc...) asparagine glycan. A helical membrane pass occupies residues 231 to 251 (LNWEVTLCLLTCWVLVYFCVW). At 252-269 (KGVKSTGKIVYFTATFPY) the chain is on the cytoplasmic side. The helical transmembrane segment at 270–290 (VVLVVLLVRGVLLPGALDGII) threads the bilayer. The Extracellular portion of the chain corresponds to 291–304 (YYLKPDWSKLASPQ). A helical transmembrane segment spans residues 305-325 (VWIDAGTQIFFSYAIGLGALT). The Cytoplasmic portion of the chain corresponds to 326-341 (ALGSYNRFNNNCYKDA). Residues 342 to 362 (IILALINSGTSFFAGFVVFSI) traverse the membrane as a helical segment. At 363-394 (LGFMATEQGVHISKVAESGPGLAFIAYPRAVT) the chain is on the extracellular side. The helical transmembrane segment at 395–415 (LMPVAPLWAALFFFMLLLLGL) threads the bilayer. Residues 416–444 (DSQFVGVEGFITGLLDLLPASYYFRFQRE) lie on the Cytoplasmic side of the membrane. Residues 445–465 (ISVALCCTICFVIDLSMVTDG) form a helical membrane-spanning segment. Over 466 to 479 (GMYVFQLFDYYSAS) the chain is Extracellular. A helical membrane pass occupies residues 480-500 (GTTLLWQAFWECVVVAWVYGA). The Cytoplasmic portion of the chain corresponds to 501–520 (DRFMDDVACMIGYRPCPWMK). The chain crosses the membrane as a helical span at residues 521 to 541 (WCWSFFTPLVCMGIFIFNVVY). Residues 542 to 560 (HEPLVYNNTYVYPWWGEAV) are Extracellular-facing. An N-linked (GlcNAc...) asparagine glycan is attached at N548. A helical membrane pass occupies residues 561 to 581 (GWAFALSSMLCVPLHLLGCLL). Over 582 to 635 (RAKGTMAERWQHLTQPIWGLHHLEYRAQDSDVRGLTTLTPVSESSKVVVVESVM) the chain is Cytoplasmic. Phosphothreonine is present on residues T617 and T620. Residue S623 is modified to Phosphoserine.

It belongs to the sodium:neurotransmitter symporter (SNF) (TC 2.A.22) family. SLC6A8 subfamily. Post-translationally, glycosylated.

The protein localises to the cell membrane. Its subcellular location is the apical cell membrane. It catalyses the reaction creatine(out) + chloride(out) + 2 Na(+)(out) = creatine(in) + chloride(in) + 2 Na(+)(in). Functionally, creatine:sodium symporter which mediates the uptake of creatine. Plays an important role in supplying creatine to the brain via the blood-brain barrier. The polypeptide is Sodium- and chloride-dependent creatine transporter 1 (SLC6A8) (Bos taurus (Bovine)).